A 400-amino-acid polypeptide reads, in one-letter code: Protein screw (400 aa).

An N-terminal signal peptide occupies residues 1–16; that stretch reads MLNVFFLTSLFYAASA. A propeptide spanning residues 17–277 is cleaved from the precursor; that stretch reads TTYVTTNNHI…RFKRDLEKRR (261 aa). Asn-165, Asn-189, Asn-201, Asn-304, and Asn-342 each carry an N-linked (GlcNAc...) asparagine glycan. 3 cysteine pairs are disulfide-bonded: Cys-300–Cys-365, Cys-329–Cys-397, and Cys-333–Cys-399.

Belongs to the TGF-beta family. As to quaternary structure, heterodimers of scw/dpp are the active subunit, dpp/dpp homodimers elicit a basal response and scw/scw homodimers alone are ineffective in specifying a dorsal pattern. Ubiquitously expressed during early stages of embryogenesis, but the effect on development appears graded and is restricted to the dorsal side of the embryo.

It localises to the secreted. Functionally, part of the signal that specifies dorsal cell fates in the embryo. Acts together with dpp. The sequence is that of Protein screw (scw) from Drosophila melanogaster (Fruit fly).